Here is a 389-residue protein sequence, read N- to C-terminus: Galactokinase (389 aa).

33–36 contributes to the substrate binding site; sequence EHTD. ATP is bound by residues Ser67 and 124–130; that span reads GAGLSSS. The Mg(2+) site is built by Ser130 and Glu162. Asp174 acts as the Proton acceptor in catalysis. Tyr224 is a binding site for substrate.

The protein belongs to the GHMP kinase family. GalK subfamily.

It is found in the cytoplasm. The catalysed reaction is alpha-D-galactose + ATP = alpha-D-galactose 1-phosphate + ADP + H(+). It functions in the pathway carbohydrate metabolism; galactose metabolism. Its function is as follows. Catalyzes the transfer of the gamma-phosphate of ATP to D-galactose to form alpha-D-galactose-1-phosphate (Gal-1-P). This is Galactokinase from Fusobacterium nucleatum subsp. nucleatum (strain ATCC 25586 / DSM 15643 / BCRC 10681 / CIP 101130 / JCM 8532 / KCTC 2640 / LMG 13131 / VPI 4355).